A 467-amino-acid polypeptide reads, in one-letter code: Cilia- and flagella-associated protein 97 (467 aa).

4 disordered regions span residues 1 to 20, 76 to 235, 336 to 370, and 412 to 467; these read MDRY…FFDS, IAKP…DISP, RQAA…KEQQ, and ALSP…AAWQ. The span at 124–135 shows a compositional bias: acidic residues; that stretch reads DNYYPDEEDSSE. Positions 162 to 177 are enriched in polar residues; the sequence is DFVSTISSSDTEYSDT. Residues 180-194 are compositionally biased toward low complexity; the sequence is DDGASKSSYQSSKGS. The span at 198-216 shows a compositional bias: basic and acidic residues; the sequence is SPERKPSRSSMRELRHYAE. Residues 223–235 are compositionally biased toward polar residues; sequence TDVTPLSTPDISP. The stretch at 310-387 forms a coiled coil; that stretch reads KKNFSFSNDE…ALLKRLESVK (78 aa). Over residues 421–439 the composition is skewed to low complexity; that stretch reads SVSRLSPSVSSGGFSRMSS.

It belongs to the CFAP97 family.

In Xenopus tropicalis (Western clawed frog), this protein is Cilia- and flagella-associated protein 97.